Reading from the N-terminus, the 187-residue chain is Putative manganese efflux pump MntP (187 aa).

6 helical membrane passes run 3–23 (FYSL…VSLC), 35–55 (HYLI…TIGY), 56–76 (FIGI…AFIL), 107–127 (LALA…FAFL), 129–149 (VNLL…CIIA), and 166–186 (LLGG…HLFF).

The protein belongs to the MntP (TC 9.B.29) family.

It is found in the cell inner membrane. Probably functions as a manganese efflux pump. The polypeptide is Putative manganese efflux pump MntP (Campylobacter jejuni (strain RM1221)).